A 255-amino-acid polypeptide reads, in one-letter code: Small ribosomal subunit protein eS1B (255 aa).

Ala2 is modified (N-acetylalanine; partial). Ser245 is modified (phosphoserine). Lys248 participates in a covalent cross-link: Glycyl lysine isopeptide (Lys-Gly) (interchain with G-Cter in ubiquitin). Thr254 carries the phosphothreonine modification.

The protein belongs to the eukaryotic ribosomal protein eS1 family. Component of the small ribosomal subunit. Mature ribosomes consist of a small (40S) and a large (60S) subunit. The 40S subunit contains about 33 different proteins and 1 molecule of RNA (18S). The 60S subunit contains about 49 different proteins and 3 molecules of RNA (25S, 5.8S and 5S).

It localises to the cytoplasm. The sequence is that of Small ribosomal subunit protein eS1B from Saccharomyces cerevisiae (strain JAY291) (Baker's yeast).